Here is a 498-residue protein sequence, read N- to C-terminus: Glycerol kinase (498 aa).

Position 12 (Thr12) interacts with ADP. Residues Thr12, Thr13, and Ser14 each contribute to the ATP site. Thr12 lines the sn-glycerol 3-phosphate pocket. Arg16 serves as a coordination point for ADP. 4 residues coordinate sn-glycerol 3-phosphate: Arg82, Glu83, Tyr134, and Asp241. Glycerol contacts are provided by Arg82, Glu83, Tyr134, Asp241, and Gln242. ADP-binding residues include Thr263 and Gly310. Positions 263, 310, 314, and 411 each coordinate ATP. ADP-binding residues include Gly411 and Asn415.

The protein belongs to the FGGY kinase family.

The enzyme catalyses glycerol + ATP = sn-glycerol 3-phosphate + ADP + H(+). Its pathway is polyol metabolism; glycerol degradation via glycerol kinase pathway; sn-glycerol 3-phosphate from glycerol: step 1/1. With respect to regulation, inhibited by fructose 1,6-bisphosphate (FBP). Functionally, key enzyme in the regulation of glycerol uptake and metabolism. Catalyzes the phosphorylation of glycerol to yield sn-glycerol 3-phosphate. This chain is Glycerol kinase, found in Herminiimonas arsenicoxydans.